We begin with the raw amino-acid sequence, 149 residues long: D-aminoacyl-tRNA deacylase (149 aa).

Residues 137–138 (GP) carry the Gly-cisPro motif, important for rejection of L-amino acids motif.

This sequence belongs to the DTD family. Homodimer.

Its subcellular location is the cytoplasm. It catalyses the reaction glycyl-tRNA(Ala) + H2O = tRNA(Ala) + glycine + H(+). The catalysed reaction is a D-aminoacyl-tRNA + H2O = a tRNA + a D-alpha-amino acid + H(+). Functionally, an aminoacyl-tRNA editing enzyme that deacylates mischarged D-aminoacyl-tRNAs. Also deacylates mischarged glycyl-tRNA(Ala), protecting cells against glycine mischarging by AlaRS. Acts via tRNA-based rather than protein-based catalysis; rejects L-amino acids rather than detecting D-amino acids in the active site. By recycling D-aminoacyl-tRNA to D-amino acids and free tRNA molecules, this enzyme counteracts the toxicity associated with the formation of D-aminoacyl-tRNA entities in vivo and helps enforce protein L-homochirality. The sequence is that of D-aminoacyl-tRNA deacylase from Clostridium novyi (strain NT).